We begin with the raw amino-acid sequence, 208 residues long: NADH-ubiquinone oxidoreductase chain 4 (208 aa).

A run of 6 helical transmembrane segments spans residues 23 to 43 (VWINVTTYSLLINLISINLLW), 60 to 80 (PLSAPLLVLTTWLLPLMLLAS), 93 to 113 (KLYISLLVCLQTLLIMTFSAN), 114 to 134 (ELIMFYILFEATLIPTLIIIT), 147 to 167 (IYFLFYTLVGSIPLLIALIYI), and 185 to 205 (PINQTWSNNILWLACIMAFMV).

This sequence belongs to the complex I subunit 4 family. In terms of assembly, core subunit of respiratory chain NADH dehydrogenase (Complex I) which is composed of 45 different subunits.

The protein localises to the mitochondrion inner membrane. The enzyme catalyses a ubiquinone + NADH + 5 H(+)(in) = a ubiquinol + NAD(+) + 4 H(+)(out). Its function is as follows. Core subunit of the mitochondrial membrane respiratory chain NADH dehydrogenase (Complex I) which catalyzes electron transfer from NADH through the respiratory chain, using ubiquinone as an electron acceptor. Essential for the catalytic activity and assembly of complex I. In Microtus pennsylvanicus (Meadow vole), this protein is NADH-ubiquinone oxidoreductase chain 4 (MT-ND4).